The primary structure comprises 284 residues: F-box protein PP2-B5 (284 aa).

The region spanning 32-80 (ASFDDLPDDCLAIISSFTSTPRDAFLAALVSKSFGLQFNSDSVWEKFLP) is the F-box domain.

This chain is F-box protein PP2-B5 (PP2B5), found in Arabidopsis thaliana (Mouse-ear cress).